The chain runs to 331 residues: Phosphatidylinositol transfer protein 4 (331 aa).

The protein belongs to the PtdIns transfer protein family. PI transfer class IIA subfamily.

Functionally, catalyzes the transfer of PtdIns and phosphatidylcholine between membranes. The sequence is that of Phosphatidylinositol transfer protein 4 (pitD) from Dictyostelium discoideum (Social amoeba).